Consider the following 151-residue polypeptide: Deoxyuridine 5'-triphosphate nucleotidohydrolase (151 aa).

Residues 70–72, asparagine 83, 87–89, and methionine 97 each bind substrate; these read RSG and LID.

Belongs to the dUTPase family. It depends on Mg(2+) as a cofactor.

It carries out the reaction dUTP + H2O = dUMP + diphosphate + H(+). The protein operates within pyrimidine metabolism; dUMP biosynthesis; dUMP from dCTP (dUTP route): step 2/2. This enzyme is involved in nucleotide metabolism: it produces dUMP, the immediate precursor of thymidine nucleotides and it decreases the intracellular concentration of dUTP so that uracil cannot be incorporated into DNA. In Actinobacillus succinogenes (strain ATCC 55618 / DSM 22257 / CCUG 43843 / 130Z), this protein is Deoxyuridine 5'-triphosphate nucleotidohydrolase.